A 123-amino-acid polypeptide reads, in one-letter code: Putative hypoxanthine phosphoribosyltransferase (123 aa).

Its function is as follows. May play a role in purine salvage. The sequence is that of Putative hypoxanthine phosphoribosyltransferase from Methanosarcina mazei (strain ATCC BAA-159 / DSM 3647 / Goe1 / Go1 / JCM 11833 / OCM 88) (Methanosarcina frisia).